The sequence spans 230 residues: SPbeta prophage-derived putative HNH endonuclease YoqL (230 aa).

One can recognise an HNH domain in the interval 136–188 (CSYCGLKIEDHKILFKGTYIQSDFHKEHVDHKGANDISNCIPACKSCNSSKHD).

The protein belongs to the HNH nuclease family.

The chain is SPbeta prophage-derived putative HNH endonuclease YoqL (yoqL) from Bacillus subtilis (strain 168).